The following is a 471-amino-acid chain: MSTKTYDAGVKDYALTYWTPDYVPLDSDLLACFKVTPQAKVSREEAAAAVAAESSTGTWTTVWSDLLTDLDYYKGRAYRIEDVPGDKESFYAFIAYPLDLFEEGSIVNVLTSLVGNVFGFKAVRALRLEDIRFPLHYVKTCGGPPNGIQVERDRMDKYGRPFLGATVKPKLGLSAKNYGRAVYEMLRGGLDFTKDDENVNSQPFMRWQNRFEFVSEAVRKAQEETGERKGHYLNVTAPTCEEMFKRAEFAKECGAPIIMHDFLTGGFTANTSLANWCRDNGMLLHIHRAMHAVIDRNPKHGIHFRVLAKCLRLSGGDHLHTGTVVGKLEGDRQSTLGFVDQLRESFIPEDRSRGLFFDQDWGGMPGVMAVASGGIHVWHIPALVTIFGDDSVLQFGGGTQGHPWGNAAGAAANRVATEACVKARNEGVEIEKHAREVLSDAARHSPELAVAMETWKEIKFEFDVVDKLDAA.

Asn-116 and Thr-166 together coordinate substrate. The active-site Proton acceptor is Lys-168. Residue Lys-170 coordinates substrate. Positions 194, 196, and 197 each coordinate Mg(2+). At Lys-194 the chain carries N6-carboxylysine. Catalysis depends on His-287, which acts as the Proton acceptor. Residues Arg-288, His-320, and Ser-372 each contribute to the substrate site.

This sequence belongs to the RuBisCO large chain family. Type I subfamily. In terms of assembly, heterohexadecamer of 8 large chains and 8 small chains; disulfide-linked. The disulfide link is formed within the large subunit homodimers. Requires Mg(2+) as cofactor. The disulfide bond which can form in the large chain dimeric partners within the hexadecamer appears to be associated with oxidative stress and protein turnover.

The enzyme catalyses 2 (2R)-3-phosphoglycerate + 2 H(+) = D-ribulose 1,5-bisphosphate + CO2 + H2O. It catalyses the reaction D-ribulose 1,5-bisphosphate + O2 = 2-phosphoglycolate + (2R)-3-phosphoglycerate + 2 H(+). In terms of biological role, ruBisCO catalyzes two reactions: the carboxylation of D-ribulose 1,5-bisphosphate, the primary event in carbon dioxide fixation, as well as the oxidative fragmentation of the pentose substrate. Both reactions occur simultaneously and in competition at the same active site. The sequence is that of Ribulose bisphosphate carboxylase large chain 2 from Allochromatium vinosum (strain ATCC 17899 / DSM 180 / NBRC 103801 / NCIMB 10441 / D) (Chromatium vinosum).